The following is a 306-amino-acid chain: Agmatinase (306 aa).

Mn(2+)-binding residues include histidine 126, aspartate 149, histidine 151, aspartate 153, aspartate 230, and aspartate 232.

Belongs to the arginase family. Agmatinase subfamily. The cofactor is Mn(2+).

It carries out the reaction agmatine + H2O = urea + putrescine. Its pathway is amine and polyamine biosynthesis; putrescine biosynthesis via agmatine pathway; putrescine from agmatine: step 1/1. Catalyzes the formation of putrescine from agmatine. The sequence is that of Agmatinase from Shigella sonnei (strain Ss046).